The sequence spans 368 residues: MEEDRVLSSVHSTVFKESESLEGKCDKIEGYDFNQGVNYPKLLRSMLTTGFQASNLGDVIDVVNQMLEWRLSDETIAPEDCSEEEKDPAYRESVKCKIFLGFTSNLVSSGVRETIRYLVQHHMVDVIVTTTGGVEEDLIKCLAPTFKGDFSLPGAYLRSKGLNRIGNLLVPNDNYCKFEDWIIPIFDQMLKEQKEESVLWTPSKLLARLGKEINNESSYLYWAYKMNIPVFCRGLTDGSLGDMLYFHSFRTSGLVIDVVQDIRAMNGEAVHATPRKTGMIILGGGLPKHHICNANMMRNGADYAVFINTGQEFDGSDSGARPDEAVSWGKIRGSAKTVKVYCDATIAFPLLVAETFASKREQSCEHKT.

NAD(+) is bound by residues 104–108 (SNLVS), 130–132 (TTG), Glu-136, and Asp-237. 135–136 (EE) serves as a coordination point for spermidine. Asp-242 contacts spermidine. NAD(+) is bound at residue Gly-284. His-289 provides a ligand contact to spermidine. An NAD(+)-binding site is contributed by 309–310 (TG). Spermidine contacts are provided by residues 315–317 (GSD) and 324–330 (EAVSWGK). Lys-330 (nucleophile) is an active-site residue. NAD(+) is bound at residue 343–344 (DA).

This sequence belongs to the deoxyhypusine synthase family. NAD(+) is required as a cofactor.

The enzyme catalyses [eIF5A protein]-L-lysine + spermidine = [eIF5A protein]-deoxyhypusine + propane-1,3-diamine. It functions in the pathway protein modification; eIF5A hypusination. Its function is as follows. Catalyzes the NAD-dependent oxidative cleavage of spermidine and the subsequent transfer of the butylamine moiety of spermidine to the epsilon-amino group of a specific lysine residue of the eIF-5A precursor protein to form the intermediate deoxyhypusine residue. Also able to produce homospermidine from putrescine. In Brassica napus (Rape), this protein is Deoxyhypusine synthase (DHS).